A 150-amino-acid chain; its full sequence is Macrodomain Ter protein (150 aa).

It belongs to the MatP family. As to quaternary structure, homodimer.

The protein localises to the cytoplasm. In terms of biological role, required for spatial organization of the terminus region of the chromosome (Ter macrodomain) during the cell cycle. Prevents early segregation of duplicated Ter macrodomains during cell division. Binds specifically to matS, which is a 13 bp signature motif repeated within the Ter macrodomain. The chain is Macrodomain Ter protein from Klebsiella pneumoniae (strain 342).